A 344-amino-acid polypeptide reads, in one-letter code: Ferredoxin--NADP reductase (344 aa).

7 residues coordinate FAD: Asp-36, Gln-44, Tyr-49, Val-89, Phe-127, Asp-291, and Thr-332.

The protein belongs to the ferredoxin--NADP reductase type 2 family. As to quaternary structure, homodimer. It depends on FAD as a cofactor.

It carries out the reaction 2 reduced [2Fe-2S]-[ferredoxin] + NADP(+) + H(+) = 2 oxidized [2Fe-2S]-[ferredoxin] + NADPH. The polypeptide is Ferredoxin--NADP reductase (Beijerinckia indica subsp. indica (strain ATCC 9039 / DSM 1715 / NCIMB 8712)).